A 345-amino-acid chain; its full sequence is NADH-quinone oxidoreductase subunit H (345 aa).

Transmembrane regions (helical) follow at residues 13–33 (VIILAQTLAVVAFVMISLLFL), 84–104 (FILAPLTSFVLAMIAWAVIPF), 115–135 (VAILYVFAVSSLEVYGVIMGG), 161–181 (IGLIIIGVILSTGSMNFGDIV), 190–210 (LFNWYWLPHFPMVFLFFISCL), 248–268 (YIAIFLMCALTSLLFFGGWLS), 277–297 (PLWMVAKMAFFFFLFAMVKAI), and 309–329 (LGWKVFLPFSLIWVVFVAFAA).

Belongs to the complex I subunit 1 family. In terms of assembly, NDH-1 is composed of 14 different subunits. Subunits NuoA, H, J, K, L, M, N constitute the membrane sector of the complex.

It is found in the cell inner membrane. It catalyses the reaction a quinone + NADH + 5 H(+)(in) = a quinol + NAD(+) + 4 H(+)(out). Its function is as follows. NDH-1 shuttles electrons from NADH, via FMN and iron-sulfur (Fe-S) centers, to quinones in the respiratory chain. The immediate electron acceptor for the enzyme in this species is believed to be ubiquinone. Couples the redox reaction to proton translocation (for every two electrons transferred, four hydrogen ions are translocated across the cytoplasmic membrane), and thus conserves the redox energy in a proton gradient. This subunit may bind ubiquinone. In Ruegeria sp. (strain TM1040) (Silicibacter sp.), this protein is NADH-quinone oxidoreductase subunit H.